The sequence spans 485 residues: ATP-dependent 6-phosphofructokinase (485 aa).

Residues Gly-105, 171–172 (RG), and 196–199 (GDGT) each bind ATP. Position 197 (Asp-197) interacts with Mg(2+). Substrate contacts are provided by residues 225-227 (TID), 270-272 (MGR), Glu-323, and 378-381 (YMIR). Asp-227 (proton acceptor) is an active-site residue. The short motif at 483–485 (SKL) is the Peroxisomal targeting signal element.

The protein belongs to the phosphofructokinase type A (PFKA) family. PPi-dependent PFK group II subfamily. Atypical ATP-dependent clade 'X' sub-subfamily. Homotetramer. Mg(2+) is required as a cofactor.

It is found in the glycosome. The enzyme catalyses beta-D-fructose 6-phosphate + ATP = beta-D-fructose 1,6-bisphosphate + ADP + H(+). The protein operates within carbohydrate degradation; glycolysis; D-glyceraldehyde 3-phosphate and glycerone phosphate from D-glucose: step 3/4. Allosterically activated by AMP. Its function is as follows. Catalyzes the phosphorylation of D-fructose 6-phosphate to fructose 1,6-bisphosphate by ATP, the first committing step of glycolysis. The chain is ATP-dependent 6-phosphofructokinase from Trypanosoma cruzi (strain CL Brener).